A 579-amino-acid polypeptide reads, in one-letter code: Probable pectinesterase/pectinesterase inhibitor 7 (579 aa).

The N-terminal stretch at 1 to 20 is a signal peptide; it reads MESPIFILITLSFFLQSVLA. Residues 22–185 form a pectinesterase inhibitor 7 region; sequence SQTLSNSSTI…TKLLGVSLAL (164 aa). N-linked (GlcNAc...) asparagine glycosylation is found at Asn27, Asn115, Asn174, Asn274, Asn277, Asn287, Asn326, and Asn333. The tract at residues 265 to 564 is pectinesterase 7; that stretch reads VTVSQDGTGN…TVTGLFIEAD (300 aa). Residue Thr342 participates in substrate binding. Asn359 is a glycosylation site (N-linked (GlcNAc...) asparagine). Residue Gln372 participates in substrate binding. Asp395 serves as the catalytic Proton donor; for pectinesterase activity. Residues Cys409 and Cys429 are joined by a disulfide bond. Asp416 serves as the catalytic Nucleophile; for pectinesterase activity. Asn462 and Asn475 each carry an N-linked (GlcNAc...) asparagine glycan. Residues Arg484 and Trp486 each contribute to the substrate site. 4 N-linked (GlcNAc...) asparagine glycosylation sites follow: Asn526, Asn533, Asn547, and Asn553.

It in the N-terminal section; belongs to the PMEI family. The protein in the C-terminal section; belongs to the pectinesterase family. Expressed in siliques.

The protein localises to the secreted. It localises to the cell wall. The catalysed reaction is [(1-&gt;4)-alpha-D-galacturonosyl methyl ester](n) + n H2O = [(1-&gt;4)-alpha-D-galacturonosyl](n) + n methanol + n H(+). The protein operates within glycan metabolism; pectin degradation; 2-dehydro-3-deoxy-D-gluconate from pectin: step 1/5. Acts in the modification of cell walls via demethylesterification of cell wall pectin. The protein is Probable pectinesterase/pectinesterase inhibitor 7 (PME7) of Arabidopsis thaliana (Mouse-ear cress).